The sequence spans 149 residues: Thioredoxin-like protein 4B (149 aa).

It belongs to the DIM1 family. Homodimer. Interacts with the U5-102 kDa protein subunit of the spliceosome.

The protein localises to the nucleus. Its function is as follows. Essential role in pre-mRNA splicing. Required in cell cycle progression for S/G(2) transition. This Mus musculus (Mouse) protein is Thioredoxin-like protein 4B (Txnl4b).